A 384-amino-acid polypeptide reads, in one-letter code: Lipid-A-disaccharide synthase (384 aa).

This sequence belongs to the LpxB family.

The catalysed reaction is a lipid X + a UDP-2-N,3-O-bis[(3R)-3-hydroxyacyl]-alpha-D-glucosamine = a lipid A disaccharide + UDP + H(+). It participates in bacterial outer membrane biogenesis; LPS lipid A biosynthesis. Its function is as follows. Condensation of UDP-2,3-diacylglucosamine and 2,3-diacylglucosamine-1-phosphate to form lipid A disaccharide, a precursor of lipid A, a phosphorylated glycolipid that anchors the lipopolysaccharide to the outer membrane of the cell. The sequence is that of Lipid-A-disaccharide synthase from Geobacter metallireducens (strain ATCC 53774 / DSM 7210 / GS-15).